Here is a 572-residue protein sequence, read N- to C-terminus: Nucleolin 1 (572 aa).

Disordered stretches follow at residues M1 to T312 and D488 to E572. The segment covering K7–K21 has biased composition (low complexity). The segment covering K27 to V38 has biased composition (basic and acidic residues). 2 stretches are compositionally biased toward low complexity: residues A45–K58 and K72–S81. Acidic residues-rich tracts occupy residues S82–E91, S109–D122, S144–E156, D177–D191, S208–D222, S235–D247, and E261–E276. A compositionally biased stretch (polar residues) spans P300–A311. RRM domains are found at residues A311–E387 and Q411–P492. Composition is skewed to basic and acidic residues over residues D488–G520 and G528–R545. Residues Q553–K566 show a composition bias toward polar residues.

Its subcellular location is the nucleus. The protein resides in the nucleolus. Functionally, involved in pre-rRNA processing and ribosome assembly. The protein is Nucleolin 1 of Oryza sativa subsp. japonica (Rice).